The following is a 65-amino-acid chain: Temporin-LK1 (65 aa).

The first 22 residues, 1–22, serve as a signal peptide directing secretion; the sequence is MFTMKKSLLLLFFLGAINLPLC. Residues 23 to 44 constitute a propeptide that is removed on maturation; it reads QEERNAEEERRDGDDEGSVEVQ. Phe-63 carries the phenylalanine amide modification.

As to expression, expressed by the skin glands.

The protein localises to the secreted. In terms of biological role, has antimicrobial activity against Gram-positive bacteria S.aureus ATCC 2592 (MIC=2.5 uM), S.aureus ATCC 43300 (MIC=2.5 uM) and B.subtilis (MIC=15.0 uM), against Gram-negative bacteria E.coli ML-35P (MIC=30.0 uM), P.aeruginosa PA01 (MIC=2.5 uM) and P.aeruginosa ATCC 27853 (MIC=2.5 uM) and against fungus C.albicans ATCC 2002 (MIC=5.0 uM). In Limnonectes kuhlii (Kuhl's Creek frog), this protein is Temporin-LK1.